Consider the following 343-residue polypeptide: Anthranilate phosphoribosyltransferase (343 aa).

5-phospho-alpha-D-ribose 1-diphosphate contacts are provided by residues G84, G87–D88, T92, N94–T97, K112–S120, and S124. Residue G84 coordinates anthranilate. Residue S96 participates in Mg(2+) binding. N115 provides a ligand contact to anthranilate. R170 is a binding site for anthranilate. The Mg(2+) site is built by D229 and E230.

The protein belongs to the anthranilate phosphoribosyltransferase family. In terms of assembly, homodimer. The cofactor is Mg(2+).

The catalysed reaction is N-(5-phospho-beta-D-ribosyl)anthranilate + diphosphate = 5-phospho-alpha-D-ribose 1-diphosphate + anthranilate. The protein operates within amino-acid biosynthesis; L-tryptophan biosynthesis; L-tryptophan from chorismate: step 2/5. Catalyzes the transfer of the phosphoribosyl group of 5-phosphorylribose-1-pyrophosphate (PRPP) to anthranilate to yield N-(5'-phosphoribosyl)-anthranilate (PRA). This Burkholderia multivorans (strain ATCC 17616 / 249) protein is Anthranilate phosphoribosyltransferase.